Consider the following 778-residue polypeptide: Probable glutamine--tRNA ligase (778 aa).

Basic and acidic residues predominate over residues 188-205 (LKPQTKANDKPKAAKPKA). Residues 188–219 (LKPQTKANDKPKAAKPKAEVTPAAQTAEAASD) are disordered. Positions 273–283 (PEPNGILHIGH) match the 'HIGH' region motif. ATP contacts are provided by residues 274–276 (EPN) and 280–286 (HIGHAKA). Asp306 and Tyr441 together coordinate L-glutamine. ATP contacts are provided by residues Thr460, 489 to 490 (RL), and 497 to 499 (VSK). Positions 496 to 500 (LVSKR) match the 'KMSKS' region motif.

Belongs to the class-I aminoacyl-tRNA synthetase family.

It catalyses the reaction tRNA(Gln) + L-glutamine + ATP = L-glutaminyl-tRNA(Gln) + AMP + diphosphate. This is Probable glutamine--tRNA ligase from Drosophila melanogaster (Fruit fly).